The following is an 882-amino-acid chain: Alanine--tRNA ligase (882 aa).

Zn(2+) contacts are provided by His570, His574, Cys672, and His676.

This sequence belongs to the class-II aminoacyl-tRNA synthetase family. The cofactor is Zn(2+).

The protein localises to the cytoplasm. It carries out the reaction tRNA(Ala) + L-alanine + ATP = L-alanyl-tRNA(Ala) + AMP + diphosphate. Its function is as follows. Catalyzes the attachment of alanine to tRNA(Ala) in a two-step reaction: alanine is first activated by ATP to form Ala-AMP and then transferred to the acceptor end of tRNA(Ala). Also edits incorrectly charged Ser-tRNA(Ala) and Gly-tRNA(Ala) via its editing domain. The protein is Alanine--tRNA ligase of Xanthomonas campestris pv. campestris (strain ATCC 33913 / DSM 3586 / NCPPB 528 / LMG 568 / P 25).